Consider the following 200-residue polypeptide: 3-isopropylmalate dehydratase small subunit (200 aa).

It belongs to the LeuD family. LeuD type 1 subfamily. Heterodimer of LeuC and LeuD.

It carries out the reaction (2R,3S)-3-isopropylmalate = (2S)-2-isopropylmalate. The protein operates within amino-acid biosynthesis; L-leucine biosynthesis; L-leucine from 3-methyl-2-oxobutanoate: step 2/4. Its function is as follows. Catalyzes the isomerization between 2-isopropylmalate and 3-isopropylmalate, via the formation of 2-isopropylmaleate. This is 3-isopropylmalate dehydratase small subunit from Aliivibrio fischeri (strain MJ11) (Vibrio fischeri).